We begin with the raw amino-acid sequence, 273 residues long: Putative phosphoenolpyruvate synthase regulatory protein (273 aa).

153–160 contributes to the ADP binding site; sequence GVSRCGKT.

The protein belongs to the pyruvate, phosphate/water dikinase regulatory protein family. PSRP subfamily.

It carries out the reaction [pyruvate, water dikinase] + ADP = [pyruvate, water dikinase]-phosphate + AMP + H(+). It catalyses the reaction [pyruvate, water dikinase]-phosphate + phosphate + H(+) = [pyruvate, water dikinase] + diphosphate. Bifunctional serine/threonine kinase and phosphorylase involved in the regulation of the phosphoenolpyruvate synthase (PEPS) by catalyzing its phosphorylation/dephosphorylation. The sequence is that of Putative phosphoenolpyruvate synthase regulatory protein from Yersinia pseudotuberculosis serotype I (strain IP32953).